Consider the following 131-residue polypeptide: Small ribosomal subunit protein uS8 (131 aa).

Belongs to the universal ribosomal protein uS8 family. In terms of assembly, part of the 30S ribosomal subunit. Contacts proteins S5 and S12.

In terms of biological role, one of the primary rRNA binding proteins, it binds directly to 16S rRNA central domain where it helps coordinate assembly of the platform of the 30S subunit. The protein is Small ribosomal subunit protein uS8 of Campylobacter fetus subsp. fetus (strain 82-40).